Reading from the N-terminus, the 202-residue chain is Protein Mbar_A1807 (202 aa).

The 192-residue stretch at 5–196 folds into the AMMECR1 domain; sequence VEGRAAVKLA…EKEPCGEVLE (192 aa).

This is Protein Mbar_A1807 from Methanosarcina barkeri (strain Fusaro / DSM 804).